The chain runs to 79 residues: Conotoxin 12 (79 aa).

The signal sequence occupies residues 1 to 22 (MKLTCVLIITVLFLTASQLITA). Positions 23–47 (DYSRDQRQYRAVRLGDEMRNFKGAR) are excised as a propeptide. 3 cysteine pairs are disulfide-bonded: Cys-49–Cys-62, Cys-56–Cys-67, and Cys-61–Cys-77.

It belongs to the conotoxin O1 superfamily. As to expression, expressed by the venom duct.

Its subcellular location is the secreted. This Conus vexillum (Flag cone) protein is Conotoxin 12.